Reading from the N-terminus, the 970-residue chain is Vacuolar membrane protease (970 aa).

Residues 1–12 (MTTADSNSSATR) show a composition bias toward polar residues. The tract at residues 1–35 (MTTADSNSSATRGSHEMADGSNRVPNDEPYHRKSP) is disordered. The Cytoplasmic segment spans residues 1 to 56 (MTTADSNSSATRGSHEMADGSNRVPNDEPYHRKSPESCENANFFVRAMRASFGYRK). A compositionally biased stretch (basic and acidic residues) spans 25–35 (PNDEPYHRKSP). Residues 57 to 77 (TSLTILVFLSVIATVLLSYYD) form a helical membrane-spanning segment. The Vacuolar portion of the chain corresponds to 78-397 (SSLEFSVSLP…FVVPMTFVFG (320 aa)). N-linked (GlcNAc...) asparagine glycans are attached at residues Asn-146 and Asn-173. 2 residues coordinate Zn(2+): His-187 and Asp-199. The active-site Proton acceptor is Glu-234. Residues Glu-235, Glu-260, and His-333 each coordinate Zn(2+). The helical transmembrane segment at 398-418 (VNVLLMVLVPLVSLISLALIF) threads the bilayer. The Cytoplasmic segment spans residues 419 to 423 (AHRKW). Residues 424–444 (SVSLVTFFKFPLSFILSIFLL) form a helical membrane-spanning segment. Residues 445–465 (DNFSSWFVVSVNNFLPNSSAG) are Vacuolar-facing. 2 N-linked (GlcNAc...) asparagine glycosylation sites follow: Asn-446 and Asn-461. The chain crosses the membrane as a helical span at residues 466-486 (IIALTYFSFFVLANYLLLNGI). Over 487–502 (NLLFWKFKGTRHDEKL) the chain is Cytoplasmic. A helical transmembrane segment spans residues 503–523 (VVILQISFMFWVSLIWSTANI). Over 524-535 (AKSQFNGEHSGE) the chain is Vacuolar. A helical transmembrane segment spans residues 536 to 556 (FLLTLLYILQAAGGVFGLLCW). At 557–620 (LFKRSRTVHT…PTKHYSYDWS (64 aa)) the chain is on the cytoplasmic side. A helical transmembrane segment spans residues 621 to 641 (IQFLFIVPISSFLSYNYGWLI). Residues 642–658 (LEGLKKTLQESATSEYL) are Vacuolar-facing. Residues 659-679 (VFRALKLLAVVVAVPYLPFIF) form a helical membrane-spanning segment. Residues 680–683 (KVNR) lie on the Cytoplasmic side of the membrane. A helical membrane pass occupies residues 684–704 (IVFLVTIFLFVYGLGAIVISE). Over 705-970 (PFTEANPLKL…LVNVKKSVLV (266 aa)) the chain is Vacuolar. Asn-738, Asn-797, and Asn-877 each carry an N-linked (GlcNAc...) asparagine glycan.

Belongs to the peptidase M28 family. It depends on Zn(2+) as a cofactor.

The protein localises to the vacuole membrane. In terms of biological role, may be involved in vacuolar sorting and osmoregulation. The sequence is that of Vacuolar membrane protease from Meyerozyma guilliermondii (strain ATCC 6260 / CBS 566 / DSM 6381 / JCM 1539 / NBRC 10279 / NRRL Y-324) (Yeast).